A 215-amino-acid chain; its full sequence is Peroxiredoxin 1 (215 aa).

The Thioredoxin domain occupies 1-157 (MKLYQKFPET…LLRITKAALV (157 aa)). The active-site Cysteine sulfenic acid (-SOH) intermediate is C45. R120 is a substrate binding site.

The protein belongs to the peroxiredoxin family. Prx6 subfamily. As to quaternary structure, homodecamer. Pentamer of dimers that assemble into a ring structure.

It localises to the cytoplasm. The enzyme catalyses a hydroperoxide + [thioredoxin]-dithiol = an alcohol + [thioredoxin]-disulfide + H2O. Its function is as follows. Thiol-specific peroxidase that catalyzes the reduction of hydrogen peroxide and organic hydroperoxides to water and alcohols, respectively. Plays a role in cell protection against oxidative stress by detoxifying peroxides. This is Peroxiredoxin 1 from Sulfuracidifex metallicus (Sulfolobus metallicus).